The following is a 495-amino-acid chain: Aspartyl/glutamyl-tRNA(Asn/Gln) amidotransferase subunit B (495 aa).

It belongs to the GatB/GatE family. GatB subfamily. In terms of assembly, heterotrimer of A, B and C subunits.

It catalyses the reaction L-glutamyl-tRNA(Gln) + L-glutamine + ATP + H2O = L-glutaminyl-tRNA(Gln) + L-glutamate + ADP + phosphate + H(+). The catalysed reaction is L-aspartyl-tRNA(Asn) + L-glutamine + ATP + H2O = L-asparaginyl-tRNA(Asn) + L-glutamate + ADP + phosphate + 2 H(+). In terms of biological role, allows the formation of correctly charged Asn-tRNA(Asn) or Gln-tRNA(Gln) through the transamidation of misacylated Asp-tRNA(Asn) or Glu-tRNA(Gln) in organisms which lack either or both of asparaginyl-tRNA or glutaminyl-tRNA synthetases. The reaction takes place in the presence of glutamine and ATP through an activated phospho-Asp-tRNA(Asn) or phospho-Glu-tRNA(Gln). This chain is Aspartyl/glutamyl-tRNA(Asn/Gln) amidotransferase subunit B, found in Rippkaea orientalis (strain PCC 8801 / RF-1) (Cyanothece sp. (strain PCC 8801)).